A 206-amino-acid polypeptide reads, in one-letter code: 2,3-bisphosphoglycerate-dependent phosphoglycerate mutase (206 aa).

Substrate is bound by residues 9-16 (RHGQSEWN), 22-23 (TG), Arg61, 88-91 (ERDY), Lys99, 115-116 (RR), and 159-160 (GN). His10 (tele-phosphohistidine intermediate) is an active-site residue. Residue Glu88 is the Proton donor/acceptor of the active site.

It belongs to the phosphoglycerate mutase family. BPG-dependent PGAM subfamily. As to quaternary structure, homodimer.

It catalyses the reaction (2R)-2-phosphoglycerate = (2R)-3-phosphoglycerate. It participates in carbohydrate degradation; glycolysis; pyruvate from D-glyceraldehyde 3-phosphate: step 3/5. Functionally, catalyzes the interconversion of 2-phosphoglycerate and 3-phosphoglycerate. The chain is 2,3-bisphosphoglycerate-dependent phosphoglycerate mutase from Brucella melitensis biotype 2 (strain ATCC 23457).